A 332-amino-acid polypeptide reads, in one-letter code: Hdr-like menaquinol oxidoreductase cytochrome b-like subunit (332 aa).

Transmembrane regions (helical) follow at residues 3–23 (GVIF…IGVI), 97–117 (DARW…LVLI), 143–163 (VFIP…FLLW), 177–197 (LPSD…GNVM), and 230–250 (IEPI…YFPF).

Consists of five subunits: an integral membrane subunit, a cytochrome b-like subunit, a cytochrome c subunit and two iron-sulfur subunits.

Its subcellular location is the cell membrane. Functionally, has menaquinol-oxidizing activity. HmeC and HmeD subunits may together mediate electron transfer from menaquinol to an unidentified electron acceptor on the cytoplasmic side of the membrane. This chain is Hdr-like menaquinol oxidoreductase cytochrome b-like subunit (hmeC), found in Archaeoglobus fulgidus (strain ATCC 49558 / DSM 4304 / JCM 9628 / NBRC 100126 / VC-16).